The primary structure comprises 580 residues: MAGTVRTACLVVAMLLSLDFPGQAQPPPPPPDATCHQVRSFFQRLQPGLKWVPETPVPGSDLQVCLPKGPTCCSRKMEEKYQLTARLNMEQLLQSASKELKFLIIQNAAVFQEAFEIVVRHAKNYTNAMFKNNYPSLTPQAFEFVGEFFTDVSLYILGSDINVDDMVNELFDSLFPVIYTQLMNPGLPDSALDINECLRGARRDLKVFGNFPKLIMTQVSKSLQVTRIFLQALNLGIEVINTTDHLKFSKDCGRMLTRMWYCSYCQGLMMVKPCGGYCNVVMQGCMAGVVEIDKYWREYILSLEELVNGMYRIYDMENVLLGLFSTIHDSIQYVQKNAGKLTTTIGKLCAHSQQRQYRSAYYPEDLFIDKKVLKVARVEHEETLSSRRRELIQKLKSFISFYSALPGYICSHSPVAENDTLCWNGQELVERYSQKAARNGMKNQFNLHELKMKGPEPVVSQIIDKLKHINQLLRTMSVPKGRVLDKNLDEEGFESGDCGDDEDECIGGSGDGMMKVKNQLRFLAELAYDLDVDDAPGSNQQATPKDNEISTFHNLGNVHSPLKLLTSMAISVVCFFFLVH.

The N-terminal stretch at 1–24 is a signal peptide; that stretch reads MAGTVRTACLVVAMLLSLDFPGQA. A Pyrrolidone carboxylic acid modification is found at Gln25. Intrachain disulfides connect Cys35–Cys72, Cys65–Cys262, Cys73–Cys265, Cys197–Cys349, Cys252–Cys285, Cys274–Cys422, and Cys278–Cys410. 2 N-linked (GlcNAc...) asparagine glycosylation sites follow: Asn124 and Asn241. Phosphoserine is present on Ser352. Asn418 carries N-linked (GlcNAc...) asparagine glycosylation. O-linked (Xyl...) (glycosaminoglycan) serine glycosylation is found at Ser495 and Ser509. Asn554 carries GPI-anchor amidated asparagine lipidation. The propeptide at 555–580 is removed in mature form; it reads LGNVHSPLKLLTSMAISVVCFFFLVH.

It belongs to the glypican family. As to quaternary structure, heterodimer; disulfide-linked. Cleavage by a furin-like convertase results in production of alpha and beta chains which form a disulfide-linked heterodimer. Interacts with DPP4. Interacts with FGF2. Interacts with WNT5A. Also interacts with WNT3A and WNT7B. Interacts with hedgehog protein SHH; the heparan sulfate chains are not required for the interaction. Also interacts with hedgehog protein IHH. Interacts with CD81. Interacts with Wnt receptors FZD4, FZD7 and FZD8; the heparan sulfate chains are required for the interaction. O-glycosylated; contains heparan sulfate and/or chondroitin sulfate. In terms of processing, cleaved intracellularly by a furin-like convertase to generate 2 subunits, alpha and beta, which remain associated through disulfide bonds and are associated with the cell surface via the GPI-anchor. This processing is essential for its role in inhibition of hedgehog signaling. A second proteolytic event may result in cleavage of the protein on the cell surface, separating it from the GPI-anchor and leading to its shedding from the cell surface.

The protein localises to the cell membrane. In terms of biological role, cell surface proteoglycan. Negatively regulates the hedgehog signaling pathway when attached via the GPI-anchor to the cell surface by competing with the hedgehog receptor PTC1 for binding to hedgehog proteins. Binding to the hedgehog protein SHH triggers internalization of the complex by endocytosis and its subsequent lysosomal degradation. Positively regulates the canonical Wnt signaling pathway by binding to the Wnt receptor Frizzled and stimulating the binding of the Frizzled receptor to Wnt ligands. Positively regulates the non-canonical Wnt signaling pathway. Binds to CD81 which decreases the availability of free CD81 for binding to the transcriptional repressor HHEX, resulting in nuclear translocation of HHEX and transcriptional repression. Inhibits the dipeptidyl peptidase activity of DPP4. Plays a role in limb patterning and skeletal development by controlling the cellular response to BMP4. Modulates the effects of growth factors BMP2, BMP7 and FGF7 on renal branching morphogenesis. Required for coronary vascular development. Plays a role in regulating cell movements during gastrulation. This Pan troglodytes (Chimpanzee) protein is Glypican-3 (GPC3).